Consider the following 248-residue polypeptide: tRNA (guanine-N(1)-)-methyltransferase (248 aa).

Residues Gly113 and 133–138 (IGDYVL) each bind S-adenosyl-L-methionine.

The protein belongs to the RNA methyltransferase TrmD family. Homodimer.

The protein resides in the cytoplasm. The enzyme catalyses guanosine(37) in tRNA + S-adenosyl-L-methionine = N(1)-methylguanosine(37) in tRNA + S-adenosyl-L-homocysteine + H(+). In terms of biological role, specifically methylates guanosine-37 in various tRNAs. The chain is tRNA (guanine-N(1)-)-methyltransferase from Shewanella piezotolerans (strain WP3 / JCM 13877).